Consider the following 483-residue polypeptide: Auxin transporter-like protein 2 (483 aa).

Over methionine 1–glutamine 53 the chain is Cytoplasmic. The helical transmembrane segment at valine 54–leucine 71 threads the bilayer. At serine 72–glycine 73 the chain is on the extracellular side. A helical transmembrane segment spans residues isoleucine 74–leucine 94. The Cytoplasmic segment spans residues tyrosine 95–asparagine 130. The helical transmembrane segment at valine 131–cysteine 151 threads the bilayer. Topologically, residues alanine 152–threonine 166 are extracellular. Residues tryptophan 167–tyrosine 187 traverse the membrane as a helical segment. The Cytoplasmic portion of the chain corresponds to arginine 188–tryptophan 190. A helical membrane pass occupies residues serine 191 to leucine 211. Residues histidine 212–leucine 226 lie on the Extracellular side of the membrane. The helical transmembrane segment at valine 227–valine 247 threads the bilayer. Residues glutamate 248–serine 261 lie on the Cytoplasmic side of the membrane. Residues isoleucine 262–tyrosine 282 traverse the membrane as a helical segment. The Extracellular segment spans residues tryptophan 283 to aspartate 306. A glycan (N-linked (GlcNAc...) asparagine) is linked at asparagine 291. The helical transmembrane segment at phenylalanine 307–leucine 327 threads the bilayer. At tyrosine 328 to arginine 350 the chain is on the cytoplasmic side. Residues leucine 351–asparagine 371 form a helical membrane-spanning segment. Over serine 372–valine 374 the chain is Extracellular. A helical membrane pass occupies residues glycine 375–phenylalanine 395. Residues arginine 396 to asparagine 422 lie on the Cytoplasmic side of the membrane. A helical transmembrane segment spans residues alanine 423 to isoleucine 443. Residues asparagine 444–leucine 483 are Extracellular-facing. An N-linked (GlcNAc...) asparagine glycan is attached at asparagine 478.

Belongs to the amino acid/polyamine transporter 2 family. Amino acid/auxin permease (AAAP) (TC 2.A.18.1) subfamily.

The protein resides in the cell membrane. In terms of biological role, carrier protein involved in proton-driven auxin influx. Mediates the formation of auxin gradient from developing leaves (site of auxin biosynthesis) to tips by contributing to the loading of auxin in vascular tissues and facilitating acropetal (base to tip) auxin transport within inner tissues of the root apex, and basipetal (tip to base) auxin transport within outer tissues of the root apex. The protein is Auxin transporter-like protein 2 (LAX2) of Arabidopsis thaliana (Mouse-ear cress).